Reading from the N-terminus, the 486-residue chain is uncharacterized protein (486 aa).

The helical transmembrane segment at 7–28 (HVISIFETVGAYFINIFYNFLY) threads the bilayer. Asparagine 73, asparagine 83, and asparagine 195 each carry an N-linked (GlcNAc...) asparagine; by host glycan. Residues 183 to 233 (ELEETYARLSSYNRSLLYQIEELTSEKKSFLEELSTLRKKYEKRQSEYRRL) are a coiled coil. Residues 299–329 (SQEVTSKSPNNYPVPQSRTIVNKPSDNYPVP) are disordered. Residues 300–323 (QEVTSKSPNNYPVPQSRTIVNKPS) show a composition bias toward polar residues. N-linked (GlcNAc...) asparagine; by host glycosylation is present at asparagine 461.

The protein belongs to the asfivirus B475L family.

Its subcellular location is the host membrane. This is an uncharacterized protein from Ornithodoros (relapsing fever ticks).